The primary structure comprises 191 residues: Putative manganese efflux pump MntP (191 aa).

Helical transmembrane passes span 3–23 (PISILLIGFAMSTDAFAAAIG), 37–57 (LRAGIIFGVIEAITPIIGWLL), 65–85 (VEAFDHWIAFGLLGALGIHMI), 107–129 (WKLALTGFATSIDAMAVGIGLAF), 144–164 (CTLTMVTAGIMFGRVLGSMVG), and 169–189 (IIGGVILVIIGATILYEHLHG).

This sequence belongs to the MntP (TC 9.B.29) family.

It is found in the cell inner membrane. Functionally, probably functions as a manganese efflux pump. This is Putative manganese efflux pump MntP from Stenotrophomonas maltophilia (strain K279a).